We begin with the raw amino-acid sequence, 537 residues long: Beta-arabinofuranosyltransferase RAY1 (537 aa).

The short motif at 370 to 372 (DVD) is the DXD motif element.

This sequence belongs to the glycosyltransferase 77 family.

Functionally, beta-arabinofuranosyltransferase that transfers specifically an arabinosyl residue from UDP-arabinofuranose to the monosaccharide galactose or beta-methyl-galactoside in vitro. Catalyzes the addition of a beta-arabinofuranose residue onto a beta-galactosyl residue of an Yariv-precipitable wall polymer in vivo. This Arabidopsis thaliana (Mouse-ear cress) protein is Beta-arabinofuranosyltransferase RAY1.